The following is a 361-amino-acid chain: Chorismate synthase (361 aa).

Arg48 and Arg54 together coordinate NADP(+). Residues 125–127, 238–239, Gly278, 293–297, and Arg319 contribute to the FMN site; these read RSS, NA, and KPTSS.

It belongs to the chorismate synthase family. In terms of assembly, homotetramer. It depends on FMNH2 as a cofactor.

The catalysed reaction is 5-O-(1-carboxyvinyl)-3-phosphoshikimate = chorismate + phosphate. The protein operates within metabolic intermediate biosynthesis; chorismate biosynthesis; chorismate from D-erythrose 4-phosphate and phosphoenolpyruvate: step 7/7. In terms of biological role, catalyzes the anti-1,4-elimination of the C-3 phosphate and the C-6 proR hydrogen from 5-enolpyruvylshikimate-3-phosphate (EPSP) to yield chorismate, which is the branch point compound that serves as the starting substrate for the three terminal pathways of aromatic amino acid biosynthesis. This reaction introduces a second double bond into the aromatic ring system. This Photorhabdus laumondii subsp. laumondii (strain DSM 15139 / CIP 105565 / TT01) (Photorhabdus luminescens subsp. laumondii) protein is Chorismate synthase.